The primary structure comprises 499 residues: Serine/threonine-protein phosphatase 5 (499 aa).

A disordered region spans residues 1-23 (MAMAEGERTECAEPPRDEPPAEG). At alanine 2 the chain carries N-acetylalanine. TPR repeat units lie at residues 28–61 (AEEL…NPSN), 62–95 (AIYY…DKKY), and 96–129 (IKGY…KPND). Positions 200-499 (DQKKLHRKCA…ANTLLQLGMM (300 aa)) are catalytic. 3 residues coordinate Mg(2+): aspartate 242, histidine 244, and aspartate 271. Histidine 244 serves as a coordination point for substrate. Substrate is bound by residues arginine 275 and 303 to 304 (NH). Position 303 (asparagine 303) interacts with Mg(2+). Histidine 304 functions as the Proton donor/acceptor in the catalytic mechanism. Histidine 352 contacts Mg(2+). Residues arginine 400 and histidine 427 each contribute to the substrate site. Histidine 427 is a Mg(2+) binding site. The tract at residues 495–499 (QLGMM) is required for autoinhibition.

This sequence belongs to the PPP phosphatase family. PP-5 (PP-T) subfamily. As to quaternary structure, probably forms a complex composed of chaperones HSP90 and HSP70, co-chaperones STIP1/HOP, CDC37, PPP5C, PTGES3/p23, TSC1 and client protein TSC2. Probably forms a complex composed of chaperones HSP90 and HSP70, co-chaperones CDC37, PPP5C, TSC1 and client protein TSC2, CDK4, AKT, RAF1 and NR3C1; this complex does not contain co-chaperones STIP1/HOP and PTGES3/p23. Part of a complex with HSP90/HSP90AA1 and steroid receptors. Interacts (via TPR repeats) with HSP90AA1 (via TPR repeat-binding motif) or HSPA1A/HSPA1B; the interaction is direct and activates the phosphatase activity. Dissociates from HSPA1A/HSPA1B and HSP90AA1 in response to arachidonic acid. Interacts with CPNE1 (via VWFA domain). Interacts with CDC16, CDC27. Interacts with KLHDC10 (via the 6 Kelch repeats); inhibits the phosphatase activity on MAP3K5. Interacts with ATM and ATR; both interactions are induced by DNA damage and enhance ATM and ATR kinase activity. Interacts with RAD17; reduced by DNA damage. Interacts with nuclear receptors such as NR3C1/GCR and PPARG (activated by agonist); regulates their transactivation activities. Interacts (via TPR repeats) with S100 proteins S100A1, S100A2, S100A6, S100B and S100P; the interactions are calcium-dependent, strongly activate PPP5C phosphatase activity and compete with HSP90AA1 and MAP3K5 interactions. Interacts with SMAD2 and SMAD3 but not with SMAD1; decreases SMAD3 phosphorylation and protein levels. Interacts (via TPR repeats) with CRY1 and CRY2; the interaction with CRY2 down-regulates the phosphatase activity on CSNK1E. Interacts (via TPR repeats) with the active form of RAC1, GNA12 or GNA13; these interactions activate the phosphatase activity and translocate PPP5C to the cell membrane. Interacts with FLCN. The cofactor is Mg(2+). Mn(2+) is required as a cofactor. In terms of processing, activated by at least two different proteolytic cleavages producing a 56 kDa and a 50 kDa form. As to expression, predominantly found in brain and, in lower levels, in testis, but was nearly undetectable in spleen, lung, skeletal muscle, kidney and liver.

It localises to the nucleus. Its subcellular location is the cytoplasm. The protein localises to the cell membrane. The enzyme catalyses O-phospho-L-seryl-[protein] + H2O = L-seryl-[protein] + phosphate. It carries out the reaction O-phospho-L-threonyl-[protein] + H2O = L-threonyl-[protein] + phosphate. Its activity is regulated as follows. Autoinhibited. In the autoinhibited state, the TPR domain interacts with the catalytic region and prevents substrate access to the catalytic pocket. Allosterically activated by various polyunsaturated fatty acids, free long-chain fatty-acids and long-chain fatty acyl-CoA esters, arachidonic acid being the most effective activator. HSP90A and probably RAC1, GNA12 and GNA13 can also release the autoinhibition by the TPR repeat. Activation by RAC1, GNA12 and GNA13 is synergistic with the one produced by fatty acids binding. Inhibited by okadaic acid. Serine/threonine-protein phosphatase that dephosphorylates a myriad of proteins involved in different signaling pathways including the kinases CSNK1E, ASK1/MAP3K5, PRKDC and RAF1, the nuclear receptors NR3C1, PPARG, ESR1 and ESR2, SMAD proteins and TAU/MAPT. Implicated in wide ranging cellular processes, including apoptosis, differentiation, DNA damage response, cell survival, regulation of ion channels or circadian rhythms, in response to steroid and thyroid hormones, calcium, fatty acids, TGF-beta as well as oxidative and genotoxic stresses. Participates in the control of DNA damage response mechanisms such as checkpoint activation and DNA damage repair through, for instance, the regulation ATM/ATR-signaling and dephosphorylation of PRKDC and TP53BP1. Inhibits ASK1/MAP3K5-mediated apoptosis induced by oxidative stress. Plays a positive role in adipogenesis, mainly through the dephosphorylation and activation of PPARG transactivation function. Also dephosphorylates and inhibits the anti-adipogenic effect of NR3C1. Regulates the circadian rhythms, through the dephosphorylation and activation of CSNK1E. May modulate TGF-beta signaling pathway by the regulation of SMAD3 phosphorylation and protein expression levels. Dephosphorylates and may play a role in the regulation of TAU/MAPT. Through their dephosphorylation, may play a role in the regulation of ions channels such as KCNH2. Dephosphorylate FNIP1, disrupting interaction with HSP90AA1/Hsp90. The protein is Serine/threonine-protein phosphatase 5 (Ppp5c) of Rattus norvegicus (Rat).